Reading from the N-terminus, the 360-residue chain is MSTIDLIKNVTKREERPVYPFTAIVGQEEMKLALILNVIDPDIGGVMIMGDRGTGKSTTIRALVDLLPEIEVVTNDPFNSDPRDPDLMSDEVREKINNKQEVPTIKTKIKIVDLPLGATEDRVCGTIDIERALNEGVKAFEPGLLAKANRGILYVDEVNLLDDHLVDILLDSAASGWNTVEREGISVRHPAKFILVGSGNPEEGELRPQLLDRFGMHAEIRTVKDPDLRVKIVEERSSFDENPQVFRKAYEQSQEDVKSQIIQARKNLANVQMDRELRIKVSQICSELDVDGLRGDLVINRAAKALAAFEGRDKVLPKDILKIITLCLRHRLRKDPLESIDSGSKVESKFYEVFGLLEEN.

50–57 serves as a coordination point for ATP; it reads GDRGTGKS. A disulfide bridge links Cys-285 with Cys-327.

Belongs to the Mg-chelatase subunits D/I family. In terms of assembly, the magnesium chelatase complex is a heterotrimer consisting of subunits CHLI, CHLD and CHLH.

The protein resides in the plastid. The protein localises to the chloroplast. It catalyses the reaction protoporphyrin IX + Mg(2+) + ATP + H2O = Mg-protoporphyrin IX + ADP + phosphate + 3 H(+). Its pathway is porphyrin-containing compound metabolism; chlorophyll biosynthesis. With respect to regulation, redox regulation; active in reducing conditions, inactive in oxidizing conditions. Thioredoxins f and m mediate the reversible reductive activation of oxidized CHLI. In terms of biological role, involved in chlorophyll biosynthesis. Catalyzes the insertion of magnesium ion into protoporphyrin IX to yield Mg-protoporphyrin IX. The magnesium-chelatase is a complex of three subunits, CHLI, CHLD and CHLH. The reaction takes place in two steps, with an ATP-dependent activation followed by an ATP-dependent chelation step. The chain is Magnesium-chelatase subunit ChlI (chlI) from Mesostigma viride (Green alga).